The chain runs to 201 residues: MAPQEDPEDHVAPAAQRVRAGTLLLANTDLLEPTFRRSVIYIVEHNDGGTLGVVLNRPSETAVHNVLPQWAKLAAKPKTMFIGGPVKRDAALCLATLRVGADPGGVSGLRHVAGRIVMVDLDADPDLIAPLVEGVRIFAGYSGWTIGQLEGEIERDDWIVLSALPSDVLVPPRADLWGRTLRRQPWPLSLLATHPIDVSRN.

Belongs to the UPF0301 (AlgH) family.

The chain is UPF0301 protein MMAR_0053 from Mycobacterium marinum (strain ATCC BAA-535 / M).